The primary structure comprises 285 residues: Glutamate racemase (285 aa).

Substrate is bound by residues 28-29 (DS) and 60-61 (YG). The active-site Proton donor/acceptor is cysteine 92. 93–94 (NT) provides a ligand contact to substrate. Residues arginine 104 and 113–119 (GVVPAIK) contribute to the UDP-N-acetyl-alpha-D-muramoyl-L-alanine site. The active-site Proton donor/acceptor is cysteine 204. 205-206 (TH) contributes to the substrate binding site.

It belongs to the aspartate/glutamate racemases family. As to quaternary structure, monomer.

The enzyme catalyses L-glutamate = D-glutamate. The protein operates within cell wall biogenesis; peptidoglycan biosynthesis. With respect to regulation, the low basal catalytic activity in increased 1000-fold in the presence of UDP-MurNAc-L-Ala, the product of the preceding enzyme in the peptidoglycan biosynthesis. In terms of biological role, provides the (R)-glutamate required for cell wall biosynthesis. This is Glutamate racemase from Escherichia coli (strain K12).